We begin with the raw amino-acid sequence, 444 residues long: Aflatoxin biosynthesis regulatory protein (444 aa).

The segment at 1-25 (MVDHISPRASPGPIRSSQTRRARKL) is disordered. A DNA-binding region (zn(2)-C6 fungal-type) is located at residues 29–56 (CTSCASSKVRCTKEKPACARCIERGLAC). The disordered stretch occupies residues 64–174 (MGRNPRAPSP…AGQEQSTLSS (111 aa)). A compositionally biased stretch (basic residues) spans 106–116 (TQAHTHAHSHP). Over residues 120 to 130 (PQSHPQSNQPP) the composition is skewed to low complexity. The span at 136 to 149 (PNGSSSVSAIFSHQ) shows a compositional bias: polar residues.

In terms of assembly, interacts with aflS.

The protein resides in the nucleus. In terms of biological role, transcription factor; part of the gene cluster that mediates the biosynthesis of aflatoxin, a polyketide-derived furanocoumarin which is part of the most toxic and carcinogenic compounds among the known mycotoxins. Binds to at least 17 genes in the aflatoxin biosynthetic cluster, leading to the activation of an enzymatic cascade reaction that results in aflatoxin biosynthesis. Promoter regions of several biosynthesis genes are bound by aflR in a dimeric form with a 5'-TCG(N5)CGA-3' binding motif. AflR also recognizes 5'-TTAGGCCTAA-3' and 5'-TCGCAGCCCGG-3' binding sequences. AflR achieves its binding specificity through a mechanism in which either two copies of aflR or its complex with aflS bind to target sites on DNA in a highly cooperative manner. AflS acts as a modulator of aflR's DNA-binding by decreasing its DNA-binding affinity. In addition to aflatoxin biosynthesis, also plays a positive role in the fungal growth, spore germination, sclerotial development, and carbohydrate metabolism. This Aspergillus flavus (strain ATCC 200026 / FGSC A1120 / IAM 13836 / NRRL 3357 / JCM 12722 / SRRC 167) protein is Aflatoxin biosynthesis regulatory protein.